Consider the following 209-residue polypeptide: TVP38/TMEM64 family membrane protein slr0305 (209 aa).

The next 5 helical transmembrane spans lie at 15 to 35, 39 to 59, 110 to 130, 134 to 154, and 171 to 191; these read LGTW…VVFL, ILTL…YVFI, LSPV…NVSL, VIGS…GSLA, and LQWT…IYVT.

The protein belongs to the TVP38/TMEM64 family.

Its subcellular location is the cell membrane. The polypeptide is TVP38/TMEM64 family membrane protein slr0305 (Synechocystis sp. (strain ATCC 27184 / PCC 6803 / Kazusa)).